An 84-amino-acid polypeptide reads, in one-letter code: Glutaredoxin (84 aa).

One can recognise a Glutaredoxin domain in the interval 1–84 (MPPVVIYTTA…AGKLDALLSA (84 aa)). A disulfide bond links C12 and C15.

It belongs to the glutaredoxin family. Monomer.

It is found in the cytoplasm. Its function is as follows. Has a glutathione-disulfide oxidoreductase activity in the presence of NADPH and glutathione reductase. Reduces low molecular weight disulfides and proteins. The protein is Glutaredoxin (grx) of Pseudomonas aeruginosa (strain ATCC 15692 / DSM 22644 / CIP 104116 / JCM 14847 / LMG 12228 / 1C / PRS 101 / PAO1).